Consider the following 403-residue polypeptide: TPR repeat-containing protein Synpcc7942_0270 (403 aa).

5 TPR repeats span residues 208-243, 244-282, 283-316, 317-350, and 351-387; these read AYLC…PEPA, VRYE…AIHK, LGAW…APQA, TVAL…DPND, and PSLY…QGSP.

This chain is TPR repeat-containing protein Synpcc7942_0270, found in Synechococcus elongatus (strain ATCC 33912 / PCC 7942 / FACHB-805) (Anacystis nidulans R2).